Reading from the N-terminus, the 330-residue chain is Free fatty acid receptor 2 (330 aa).

Residues 1-8 are Extracellular-facing; it reads MTPDWHSS. The chain crosses the membrane as a helical span at residues 9–29; sequence LILTAYILIFLTGLPANLLAL. The Cytoplasmic segment spans residues 30 to 43; sequence RAFMGRVRQPQPAP. Residues 44–64 traverse the membrane as a helical segment; sequence VHILLLNLTLADLLLLLLLPF. Residues 65–79 lie on the Extracellular side of the membrane; sequence RIVEAASNFRWYLPK. Residues 80–100 form a helical membrane-spanning segment; it reads IVCALTGFGFYSSIYCSTWLL. At 101-126 the chain is on the cytoplasmic side; sequence AGISMERYLGVAFPVQYKLSRRPLYG. A helical membrane pass occupies residues 127–147; sequence VIAALVAWIMSFGHCTIVIIV. At 148-184 the chain is on the extracellular side; the sequence is QYLNSTEQVGTENQITCYENFTQEQLDVVLPVRLELC. N-linked (GlcNAc...) asparagine glycosylation is found at N151 and N167. The helical transmembrane segment at 185-205 threads the bilayer; sequence LVLFFVPMAVTIFCYWRFVWI. Residues 206–219 lie on the Cytoplasmic side of the membrane; it reads MLTQPHVGAQRRRR. Residues 220 to 240 traverse the membrane as a helical segment; it reads AVGLAVVTLLNFLVCFGPYNM. Topologically, residues 241 to 255 are extracellular; the sequence is SHLVGFYLRQSPSWR. Residues 256 to 276 traverse the membrane as a helical segment; sequence VEAVVFSSLNASLDPLLFYFS. Topologically, residues 277–330 are cytoplasmic; it reads SSVVRRAFGKGLLLIRNPASSMLGRGAKETVEGTKMDRGGSQAEGVQSSEFVTE. Residues 306–330 are disordered; it reads TVEGTKMDRGGSQAEGVQSSEFVTE. Polar residues predominate over residues 320–330; sequence EGVQSSEFVTE.

The protein belongs to the G-protein coupled receptor 1 family. In terms of assembly, interacts with FCN1 (via Fibrinogen C-terminal domain). Highly expressed in hematopoietic tissues, such as spleen and bone marrow, with highest levels in a subset of immune cells, including monocytes or neutrophils. Expressed in adipose tissues with high expression in differentiating adipocytes. Expressed by intestinal endocrine cells.

The protein localises to the cell membrane. Functionally, g protein-coupled receptor that is activated by a major product of dietary fiber digestion, the short chain fatty acids (SCFAs), and that plays a role in the regulation of whole-body energy homeostasis and in intestinal immunity. In omnivorous mammals, the short chain fatty acids acetate, propionate and butyrate are produced primarily by the gut microbiome that metabolizes dietary fibers. SCFAs serve as a source of energy but also act as signaling molecules. That G protein-coupled receptor is probably coupled to the pertussis toxin-sensitive, G(i/o)-alpha family of G proteins but also to the Gq family. Its activation results in the formation of inositol 1,4,5-trisphosphate, the mobilization of intracellular calcium, the phosphorylation of the MAPK3/ERK1 and MAPK1/ERK2 kinases and the inhibition of intracellular cAMP accumulation. May play a role in glucose homeostasis by regulating the secretion of GLP-1, in response to short-chain fatty acids accumulating in the intestine. May also regulate the production of LEP/Leptin, a hormone acting on the central nervous system to inhibit food intake. Finally, may also regulate whole-body energy homeostasis through adipogenesis regulating both differentiation and lipid storage of adipocytes. In parallel to its role in energy homeostasis, may also mediate the activation of the inflammatory and immune responses by SCFA in the intestine, regulating the rapid production of chemokines and cytokines. May also play a role in the resolution of the inflammatory response and control chemotaxis in neutrophils. In addition to SCFAs, may also be activated by the extracellular lectin FCN1 in a process leading to activation of monocytes and inducing the secretion of interleukin-8/IL-8 in response to the presence of microbes. This chain is Free fatty acid receptor 2 (Ffar2), found in Mus musculus (Mouse).